A 235-amino-acid chain; its full sequence is UPF0758 protein A1S_2918 (235 aa).

Residues 1 to 20 (MNTSIKNWPEQERPRERLLQ) form a disordered region. The span at 9–18 (PEQERPRERL) shows a compositional bias: basic and acidic residues. One can recognise an MPN domain in the interval 105–227 (SLHSSHLVLD…SFSFAEQQLL (123 aa)). Zn(2+)-binding residues include histidine 176, histidine 178, and aspartate 189. The short motif at 176-189 (HNHPFGSPQPSPED) is the JAMM motif element.

Belongs to the UPF0758 family.

This is UPF0758 protein A1S_2918 from Acinetobacter baumannii (strain ATCC 17978 / DSM 105126 / CIP 53.77 / LMG 1025 / NCDC KC755 / 5377).